Here is a 126-residue protein sequence, read N- to C-terminus: Holo-[acyl-carrier-protein] synthase (126 aa).

The Mg(2+) site is built by Asp-9 and Glu-58.

The protein belongs to the P-Pant transferase superfamily. AcpS family. The cofactor is Mg(2+).

The protein resides in the cytoplasm. It carries out the reaction apo-[ACP] + CoA = holo-[ACP] + adenosine 3',5'-bisphosphate + H(+). Transfers the 4'-phosphopantetheine moiety from coenzyme A to a Ser of acyl-carrier-protein. This is Holo-[acyl-carrier-protein] synthase from Hamiltonella defensa subsp. Acyrthosiphon pisum (strain 5AT).